Consider the following 514-residue polypeptide: Probable cytosol aminopeptidase (514 aa).

The Mn(2+) site is built by Lys266 and Asp271. Lys278 is a catalytic residue. Asp289, Asp357, and Glu359 together coordinate Mn(2+). Arg361 is an active-site residue.

The protein belongs to the peptidase M17 family. It depends on Mn(2+) as a cofactor.

The protein resides in the cytoplasm. The catalysed reaction is Release of an N-terminal amino acid, Xaa-|-Yaa-, in which Xaa is preferably Leu, but may be other amino acids including Pro although not Arg or Lys, and Yaa may be Pro. Amino acid amides and methyl esters are also readily hydrolyzed, but rates on arylamides are exceedingly low.. The enzyme catalyses Release of an N-terminal amino acid, preferentially leucine, but not glutamic or aspartic acids.. Its function is as follows. Presumably involved in the processing and regular turnover of intracellular proteins. Catalyzes the removal of unsubstituted N-terminal amino acids from various peptides. The chain is Probable cytosol aminopeptidase from Oleidesulfovibrio alaskensis (strain ATCC BAA-1058 / DSM 17464 / G20) (Desulfovibrio alaskensis).